A 310-amino-acid chain; its full sequence is Inorganic pyrophosphatase, mitochondrial (310 aa).

Residues 1–30 (MNLLRMNALTSKARSIERLKQTLNILSIRN) constitute a mitochondrion transit peptide. Positions 152, 157, and 189 each coordinate Mg(2+).

It belongs to the PPase family. In terms of assembly, homodimer that binds non-covalently to a protein complex in the inner mitochondrial membrane. It depends on Mg(2+) as a cofactor.

It is found in the mitochondrion. The enzyme catalyses diphosphate + H2O = 2 phosphate + H(+). Involved in energy production. Its activity is stimulated by uncouplers of ATP synthesis. In Saccharomyces cerevisiae (strain ATCC 204508 / S288c) (Baker's yeast), this protein is Inorganic pyrophosphatase, mitochondrial (PPA2).